The chain runs to 183 residues: Orotate phosphoribosyltransferase (183 aa).

5-phospho-alpha-D-ribose 1-diphosphate contacts are provided by residues arginine 21, lysine 88, and 112–120 (EDVVTTGES). Residues threonine 116 and arginine 144 each coordinate orotate.

This sequence belongs to the purine/pyrimidine phosphoribosyltransferase family. PyrE subfamily. In terms of assembly, homodimer. Mg(2+) is required as a cofactor.

The enzyme catalyses orotidine 5'-phosphate + diphosphate = orotate + 5-phospho-alpha-D-ribose 1-diphosphate. Its pathway is pyrimidine metabolism; UMP biosynthesis via de novo pathway; UMP from orotate: step 1/2. Its function is as follows. Catalyzes the transfer of a ribosyl phosphate group from 5-phosphoribose 1-diphosphate to orotate, leading to the formation of orotidine monophosphate (OMP). The chain is Orotate phosphoribosyltransferase from Thermus thermophilus (strain ATCC BAA-163 / DSM 7039 / HB27).